The following is a 392-amino-acid chain: 5-azacytidine-induced protein 2 (392 aa).

A homodimerization region spans residues 1-197 (MDALVEDDIC…IELQKAKQTD (197 aa)). Coiled coils occupy residues 40–76 (ALVT…LIAR) and 102–196 (DRDN…AKQT). Positions 216–257 (SDNMQHAYWELKREMSNLHLVTQVQAELLRKLKTSTAIKKAC) are interaction with TBK1 and IKBKE. A phosphoserine mark is found at serine 318 and serine 353.

In terms of assembly, homodimer. Interacts with IKBKE. Interacts with TBK1. Interacts with TICAM1. Interacts with TAX1BP1. Interacts with CALCOCO2. (Microbial infection) Interacts with vaccinia virus protein C6. Post-translationally, ubiquitinated via 'Lys-48'-linked polyubiquitination by TRIM38, leading to its degradation. In terms of tissue distribution, widely expressed. Abundant expression seen in the pancreas and testis.

The protein localises to the cytoplasm. Adapter protein which binds TBK1 and IKBKE playing a role in antiviral innate immunity. Activates serine/threonine-protein kinase TBK1 and facilitates its oligomerization. Enhances the phosphorylation of NF-kappa-B p65 subunit RELA by TBK1. Promotes TBK1-induced as well as TNF-alpha or PMA-induced activation of NF-kappa-B. Participates in IFNB promoter activation via TICAM1. This is 5-azacytidine-induced protein 2 (AZI2) from Homo sapiens (Human).